The chain runs to 123 residues: Large ribosomal subunit protein bL12 (123 aa).

Belongs to the bacterial ribosomal protein bL12 family. In terms of assembly, homodimer. Part of the ribosomal stalk of the 50S ribosomal subunit. Forms a multimeric L10(L12)X complex, where L10 forms an elongated spine to which 2 to 4 L12 dimers bind in a sequential fashion. Binds GTP-bound translation factors.

In terms of biological role, forms part of the ribosomal stalk which helps the ribosome interact with GTP-bound translation factors. Is thus essential for accurate translation. The chain is Large ribosomal subunit protein bL12 from Albidiferax ferrireducens (strain ATCC BAA-621 / DSM 15236 / T118) (Rhodoferax ferrireducens).